The chain runs to 693 residues: Polyribonucleotide nucleotidyltransferase (693 aa).

Residues aspartate 486 and aspartate 492 each contribute to the Mg(2+) site. In terms of domain architecture, KH spans 553–612; that stretch reads PRIHTIKINPEKIKDVIGKGGSVIRMLTEETGTTIEIEDDGTVKISAVMQEKAKCAIQRI. Residues 622 to 690 enclose the S1 motif domain; it reads GSVYTGKVTR…RQGRLRLSIK (69 aa).

This sequence belongs to the polyribonucleotide nucleotidyltransferase family. Component of the RNA degradosome, which is a multiprotein complex involved in RNA processing and mRNA degradation. Mg(2+) is required as a cofactor.

It localises to the cytoplasm. It catalyses the reaction RNA(n+1) + phosphate = RNA(n) + a ribonucleoside 5'-diphosphate. Functionally, involved in mRNA degradation. Catalyzes the phosphorolysis of single-stranded polyribonucleotides processively in the 3'- to 5'-direction. The protein is Polyribonucleotide nucleotidyltransferase of Buchnera aphidicola subsp. Baizongia pistaciae (strain Bp).